The sequence spans 770 residues: Protein PAT1 homolog 1 (770 aa).

The tract at residues 1–42 (MFRYESLEDCPLDEDEDAFQGLGEEDEEIDQFNDDTFGSGAV) is disordered. The interval 1-84 (MFRYESLEDC…EMDLLGDHEE (84 aa)) is region A; interaction with DDX6/RCK. The tract at residues 1–397 (MFRYESLEDC…HRVSHQDHLR (397 aa)) is involved in nuclear foci localization. Acidic residues predominate over residues 7–33 (LEDCPLDEDEDAFQGLGEEDEEIDQFN). The tract at residues 85–388 (NLAERLSKMV…LNGTGDRGGH (304 aa)) is region N; interaction with decapping machinery. Positions 86 to 95 (LAERLSKMVI) match the Nuclear export signal motif. Phosphoserine is present on Ser-177. Thr-178 is modified (phosphothreonine). Residues Ser-179 and Ser-184 each carry the phosphoserine modification. Thr-194 is subject to Phosphothreonine. Residues Arg-217, Arg-223, and Arg-263 each carry the asymmetric dimethylarginine modification. The tract at residues 223–397 (RYPAPYGERM…HRVSHQDHLR (175 aa)) is involved in RNA-binding. Ser-278 is modified (phosphoserine). Arg-284 carries the asymmetric dimethylarginine modification. 2 disordered regions span residues 320-341 (SAPPPATPPPQQHPPGPGPHLQ) and 369-394 (QLQSRNQHRNLNGTGDRGGHRVSHQD). Over residues 321–337 (APPPATPPPQQHPPGPG) the composition is skewed to pro residues. Low complexity predominate over residues 369–380 (QLQSRNQHRNLN). Position 385 is an omega-N-methylarginine (Arg-385). Positions 385 to 394 (RGGHRVSHQD) are enriched in basic and acidic residues. A region H region spans residues 389-448 (RVSHQDHLRKDPYANLMLQREKDWVSKIQMMQLQSTDPYLDDFYYQNYFEKLEKSSAAEE). Residues 398–770 (KDPYANLMLQ…TKLQLVQGMR (373 aa)) form an involved in nuclear speckle localization region. A region C region spans residues 449–770 (MQGDGPKKER…TKLQLVQGMR (322 aa)).

This sequence belongs to the PAT1 family. In terms of assembly, interacts (via region A) with DDX6/RCK. Interacts (via region H and region C) with LSM1 and LSM4. Interacts (via region N) with DCP1A, DCP2, EDC3, EDC4 and XRN1. Interacts with the CCR4-NOT complex. Interacts with the Lsm-containing SMN-Sm protein complex. Interacts with EIF4ENIF1/4E-T.

The protein resides in the cytoplasm. It localises to the P-body. It is found in the nucleus. Its subcellular location is the PML body. The protein localises to the nucleus speckle. RNA-binding protein involved in deadenylation-dependent decapping of mRNAs, leading to the degradation of mRNAs. Acts as a scaffold protein that connects deadenylation and decapping machinery. Required for cytoplasmic mRNA processing body (P-body) assembly. This Rattus norvegicus (Rat) protein is Protein PAT1 homolog 1 (Patl1).